Reading from the N-terminus, the 240-residue chain is Thymidylate kinase (240 aa).

Residue 10–17 (GINGVGKS) participates in ATP binding.

This sequence belongs to the thymidylate kinase family.

The enzyme catalyses dTMP + ATP = dTDP + ADP. The protein operates within pyrimidine metabolism; dTTP biosynthesis. Functionally, catalyzes the conversion of dTMP to dTDP. This is Thymidylate kinase (TMK) from African swine fever virus (strain Badajoz 1971 Vero-adapted) (Ba71V).